A 630-amino-acid polypeptide reads, in one-letter code: Elongation factor 4 (630 aa).

The disordered stretch occupies residues 1–22 (MTVARNRAGAGPGKGSPISSFA). One can recognise a tr-type G domain in the interval 30–211 (ARIRNFCIIA…EVVRQVPAPV (182 aa)). Residues 42-47 (DHGKST) and 158-161 (NKID) each bind GTP.

This sequence belongs to the TRAFAC class translation factor GTPase superfamily. Classic translation factor GTPase family. LepA subfamily.

Its subcellular location is the cell membrane. The catalysed reaction is GTP + H2O = GDP + phosphate + H(+). Its function is as follows. Required for accurate and efficient protein synthesis under certain stress conditions. May act as a fidelity factor of the translation reaction, by catalyzing a one-codon backward translocation of tRNAs on improperly translocated ribosomes. Back-translocation proceeds from a post-translocation (POST) complex to a pre-translocation (PRE) complex, thus giving elongation factor G a second chance to translocate the tRNAs correctly. Binds to ribosomes in a GTP-dependent manner. The sequence is that of Elongation factor 4 from Rhodococcus opacus (strain B4).